The primary structure comprises 440 residues: Argininosuccinate lyase (440 aa).

The protein belongs to the lyase 1 family. Argininosuccinate lyase subfamily.

It is found in the cytoplasm. It carries out the reaction 2-(N(omega)-L-arginino)succinate = fumarate + L-arginine. Its pathway is amino-acid biosynthesis; L-arginine biosynthesis; L-arginine from L-ornithine and carbamoyl phosphate: step 3/3. The sequence is that of Argininosuccinate lyase from Clostridium botulinum (strain ATCC 19397 / Type A).